The sequence spans 65 residues: Large ribosomal subunit protein bL35 (65 aa).

Composition is skewed to basic residues over residues Met1–Thr15 and Gln26–Leu44. Residues Met1–Ala65 form a disordered region.

It belongs to the bacterial ribosomal protein bL35 family.

The protein is Large ribosomal subunit protein bL35 of Ralstonia nicotianae (strain ATCC BAA-1114 / GMI1000) (Ralstonia solanacearum).